Consider the following 1212-residue polypeptide: DNA-directed RNA polymerase subunit beta (1212 aa).

The span at 1176 to 1195 (QQEKKKLAEEAAKKDDKSAE) shows a compositional bias: basic and acidic residues. Residues 1176–1212 (QQEKKKLAEEAAKKDDKSAEPVDQSDSSTSSDDKVSK) are disordered.

It belongs to the RNA polymerase beta chain family. As to quaternary structure, the RNAP catalytic core consists of 2 alpha, 1 beta, 1 beta' and 1 omega subunit. When a sigma factor is associated with the core the holoenzyme is formed, which can initiate transcription.

The enzyme catalyses RNA(n) + a ribonucleoside 5'-triphosphate = RNA(n+1) + diphosphate. Functionally, DNA-dependent RNA polymerase catalyzes the transcription of DNA into RNA using the four ribonucleoside triphosphates as substrates. This Lactobacillus gasseri (strain ATCC 33323 / DSM 20243 / BCRC 14619 / CIP 102991 / JCM 1131 / KCTC 3163 / NCIMB 11718 / NCTC 13722 / AM63) protein is DNA-directed RNA polymerase subunit beta.